Here is a 468-residue protein sequence, read N- to C-terminus: Putrescine aminotransferase (468 aa).

Residues glycine 150–threonine 151 and glutamine 274 each bind pyridoxal 5'-phosphate. Lysine 300 bears the N6-(pyridoxal phosphate)lysine mark. Threonine 332 contributes to the pyridoxal 5'-phosphate binding site.

The protein belongs to the class-III pyridoxal-phosphate-dependent aminotransferase family. Putrescine aminotransferase subfamily. The cofactor is pyridoxal 5'-phosphate.

It carries out the reaction an alkane-alpha,omega-diamine + 2-oxoglutarate = an omega-aminoaldehyde + L-glutamate. It catalyses the reaction putrescine + 2-oxoglutarate = 1-pyrroline + L-glutamate + H2O. The enzyme catalyses cadaverine + 2-oxoglutarate = 5-aminopentanal + L-glutamate. The protein operates within amine and polyamine degradation; putrescine degradation; 4-aminobutanal from putrescine (transaminase route): step 1/1. Its function is as follows. Catalyzes the aminotransferase reaction from putrescine to 2-oxoglutarate, leading to glutamate and 4-aminobutanal, which spontaneously cyclizes to form 1-pyrroline. This is the first step in one of two pathways for putrescine degradation, where putrescine is converted into 4-aminobutanoate (gamma-aminobutyrate or GABA) via 4-aminobutanal. Also functions as a cadaverine transaminase in a a L-lysine degradation pathway to succinate that proceeds via cadaverine, glutarate and L-2-hydroxyglutarate. This Pectobacterium atrosepticum (strain SCRI 1043 / ATCC BAA-672) (Erwinia carotovora subsp. atroseptica) protein is Putrescine aminotransferase.